The following is an 847-amino-acid chain: B-cell receptor CD22 (847 aa).

The N-terminal stretch at 1-19 is a signal peptide; the sequence is MHLLGPWLLLLVLEYLAFC. One can recognise an Ig-like V-type domain in the interval 20–138; it reads DSSKWAFEHP…MERIHLNVSE (119 aa). Over 20–687 the chain is Extracellular; the sequence is DSSKWAFEHP…YYSPETIGRR (668 aa). 3 N-linked (GlcNAc...) asparagine glycosylation sites follow: Asn-67, Asn-101, and Asn-112. Residue Arg-120 coordinates N-acetylneuraminate. 9 N-linked (GlcNAc...) asparagine glycosylation sites follow: Asn-135, Asn-164, Asn-231, Asn-295, Asn-363, Asn-428, Asn-445, Asn-448, and Asn-479. Ig-like C2-type domains follow at residues 143–235, 242–324, 331–416, 419–500, 505–582, and 593–676; these read PHIQ…DTVQ, PKLE…AEVF, PEPS…LDVQ, PKKV…VALN, PRDV…QTAS, and PRRL…STLN. A disulfide bridge connects residues Cys-161 and Cys-219. 2 cysteine pairs are disulfide-bonded: Cys-265–Cys-309 and Cys-353–Cys-396. Intrachain disulfides connect Cys-442/Cys-484 and Cys-529/Cys-571. N-linked (GlcNAc...) asparagine glycosylation is found at Asn-574 and Asn-634. A disulfide bridge connects residues Cys-616 and Cys-659. The chain crosses the membrane as a helical span at residues 688–708; sequence VAVGLGSCLAILILAICGLKL. Topologically, residues 709–847 are cytoplasmic; sequence QRRWKRTQSQ…ENVDYVILKH (139 aa). Ser-725, Ser-726, and Ser-729 each carry phosphoserine. Short sequence motifs (ITIM motif) lie at residues 760–765 and 794–799; these read ISYTTL and VTYSVL. Tyr-762 carries the post-translational modification Phosphotyrosine. Phosphotyrosine is present on residues Tyr-807, Tyr-822, and Tyr-842. Short sequence motifs (ITIM motif) lie at residues 820–825 and 840–845; these read IHYSEL and VDYVIL.

This sequence belongs to the immunoglobulin superfamily. SIGLEC (sialic acid binding Ig-like lectin) family. In terms of assembly, predominantly monomer of isoform CD22-beta. Also found as heterodimer of isoform CD22-beta and a shorter isoform. Interacts with PTPN6/SHP-1, LYN, SYK, PIK3R1/PIK3R2 and PLCG1 upon phosphorylation. Interacts with GRB2, INPP5D and SHC1 upon phosphorylation. May form a complex with INPP5D/SHIP, GRB2 and SHC1. In terms of processing, phosphorylation of Tyr-762, Tyr-807 and Tyr-822 are involved in binding to SYK, GRB2 and SYK, respectively. Phosphorylation of Tyr-842 is involved in binding to SYK, PLCG2 and PIK3R1/PIK3R2. Phosphorylated on tyrosine residues by LYN.

The protein localises to the cell membrane. Most highly expressed siglec (sialic acid-binding immunoglobulin-like lectin) on B-cells that plays a role in various aspects of B-cell biology including differentiation, antigen presentation, and trafficking to bone marrow. Binds to alpha 2,6-linked sialic acid residues of surface molecules such as CD22 itself, CD45 and IgM in a cis configuration. Can also bind to ligands on other cells as an adhesion molecule in a trans configuration. Acts as an inhibitory coreceptor on the surface of B-cells and inhibits B-cell receptor induced signaling, characterized by inhibition of the calcium mobilization and cellular activation. Mechanistically, the immunoreceptor tyrosine-based inhibitory motif domain is phosphorylated by the Src kinase LYN, which in turn leads to the recruitment of the protein tyrosine phosphatase 1/PTPN6, leading to the negative regulation of BCR signaling. If this negative signaling from is of sufficient strength, apoptosis of the B-cell can be induced. In Gorilla gorilla gorilla (Western lowland gorilla), this protein is B-cell receptor CD22.